We begin with the raw amino-acid sequence, 506 residues long: Anaerobic nitric oxide reductase transcription regulator NorR (506 aa).

A 4-aspartylphosphate modification is found at Asp-57. The 230-residue stretch at Met-187–Val-416 folds into the Sigma-54 factor interaction domain. ATP is bound by residues Gly-215–Glu-222 and Ala-278–Glu-287. Residues Trp-481–Lys-500 constitute a DNA-binding region (H-T-H motif).

It functions in the pathway nitrogen metabolism; nitric oxide reduction. In terms of biological role, required for the expression of anaerobic nitric oxide (NO) reductase, acts as a transcriptional activator for at least the norVW operon. Activation also requires sigma-54. This Citrobacter koseri (strain ATCC BAA-895 / CDC 4225-83 / SGSC4696) protein is Anaerobic nitric oxide reductase transcription regulator NorR.